A 306-amino-acid polypeptide reads, in one-letter code: Ribonuclease Z (306 aa).

Residues histidine 63, histidine 65, aspartate 67, histidine 68, histidine 140, aspartate 211, and histidine 269 each coordinate Zn(2+). Aspartate 67 functions as the Proton acceptor in the catalytic mechanism.

This sequence belongs to the RNase Z family. In terms of assembly, homodimer. Requires Zn(2+) as cofactor.

The catalysed reaction is Endonucleolytic cleavage of RNA, removing extra 3' nucleotides from tRNA precursor, generating 3' termini of tRNAs. A 3'-hydroxy group is left at the tRNA terminus and a 5'-phosphoryl group is left at the trailer molecule.. In terms of biological role, zinc phosphodiesterase, which displays some tRNA 3'-processing endonuclease activity. Probably involved in tRNA maturation, by removing a 3'-trailer from precursor tRNA. In Listeria innocua serovar 6a (strain ATCC BAA-680 / CLIP 11262), this protein is Ribonuclease Z.